The chain runs to 190 residues: ADP-ribosylation factor-like protein 6 (190 aa).

A lipid anchor (N-myristoyl glycine) is attached at Gly-2. GTP contacts are provided by residues 24–31 (GLDNSGKT), 69–73 (DMAGQ), and 130–133 (NKMD).

Belongs to the small GTPase superfamily. Arf family. As to expression, specifically expressed in ciliated cells.

Its subcellular location is the cytoplasm. This is ADP-ribosylation factor-like protein 6 from Caenorhabditis elegans.